The sequence spans 388 residues: DNA replication and repair protein RecF (388 aa).

30–37 (GANGNGKT) contributes to the ATP binding site.

This sequence belongs to the RecF family.

The protein localises to the cytoplasm. Its function is as follows. The RecF protein is involved in DNA metabolism; it is required for DNA replication and normal SOS inducibility. RecF binds preferentially to single-stranded, linear DNA. It also seems to bind ATP. This Nocardia farcinica (strain IFM 10152) protein is DNA replication and repair protein RecF.